The sequence spans 260 residues: Tropinone reductase homolog At1g07450 (260 aa).

Position 14 to 38 (14 to 38 (LVTGGSKGIGYAIVEELVGFGARVH)) interacts with NADP(+). S147 is a binding site for substrate. Catalysis depends on Y159, which acts as the Proton acceptor.

It belongs to the short-chain dehydrogenases/reductases (SDR) family. SDR65C subfamily.

In Arabidopsis thaliana (Mouse-ear cress), this protein is Tropinone reductase homolog At1g07450.